Reading from the N-terminus, the 191-residue chain is Adenylate kinase (191 aa).

11-16 (GAGKGT) contacts ATP. The tract at residues 31-60 (STGDILRSNVAERSPLGIKAKDYMDKGDLV) is NMP. Residues T32, R37, 58-60 (DLV), 86-89 (GFPR), and Q93 each bind AMP. Residues 132-138 (SRKREDD) are LID. R133 provides a ligand contact to ATP. Positions 135 and 146 each coordinate AMP. An ATP-binding site is contributed by N174.

This sequence belongs to the adenylate kinase family. Monomer.

It is found in the cytoplasm. The enzyme catalyses AMP + ATP = 2 ADP. It participates in purine metabolism; AMP biosynthesis via salvage pathway; AMP from ADP: step 1/1. Functionally, catalyzes the reversible transfer of the terminal phosphate group between ATP and AMP. Plays an important role in cellular energy homeostasis and in adenine nucleotide metabolism. The protein is Adenylate kinase of Trichodesmium erythraeum (strain IMS101).